A 71-amino-acid chain; its full sequence is Brevinin-1E (71 aa).

A signal peptide spans 1–22 (MFTLKKSMLLLFFLGTINLSLC). A propeptide spanning residues 23–45 (EEERDADEEERRDNPDESEVEVE) is cleaved from the precursor. Cysteine 65 and cysteine 71 form a disulfide bridge.

Belongs to the frog skin active peptide (FSAP) family. Brevinin subfamily. In terms of tissue distribution, expressed by the skin glands.

It is found in the secreted. Shows antibacterial activity against representative Gram-negative and Gram-positive bacterial species, and a very high hemolytic activity. The chain is Brevinin-1E from Pelophylax lessonae (Pool frog).